The primary structure comprises 264 residues: Phosphatidylinositol transfer protein 1 (264 aa).

A disordered region spans residues 151 to 174; it reads NYKETEDPTKIRSEKANRGPLEEE. Positions 238-264 form a coiled coil; the sequence is VRAFELKTKEDLKKKLEEKDENKAAEK.

This sequence belongs to the PtdIns transfer protein family. PI transfer class I subfamily. Phosphorylated in response to activation of rasG.

It localises to the cytoplasm. The protein resides in the golgi apparatus. In terms of biological role, catalyzes the transfer of PtdIns and phosphatidylcholine between membranes. In Dictyostelium discoideum (Social amoeba), this protein is Phosphatidylinositol transfer protein 1 (pitA).